The chain runs to 503 residues: Probable voltage-gated potassium channel subunit kvs-4 (503 aa).

Topologically, residues 1-231 (MNSAIMQGAA…EPASSGKAQA (231 aa)) are cytoplasmic. A Required for dendritic localization motif is present at residues 217-219 (WNI). A helical transmembrane segment spans residues 232 to 252 (FAVCSVVFVLISISGLVLGSL). Over 253–275 (PELQVATKQRNNLTGEEFTEMEP) the chain is Extracellular. Asn-264 is a glycosylation site (N-linked (GlcNAc...) asparagine). Residues 276-296 (MPILGYIEYVCIVWFTMEYGL) form a helical membrane-spanning segment. The Cytoplasmic portion of the chain corresponds to 297-313 (KMLVSAERSKTFRQLLN). Residues 314 to 334 (IIDLLAILPFIIEMLLLIFGI) form a helical membrane-spanning segment. The Extracellular portion of the chain corresponds to 335–346 (STEQLRDLKGAF). Residues 347 to 366 (LVIRILRVLRVIRVLKLGRY) traverse the membrane as a helical; Voltage-sensor segment. At 367-383 (SSGLQMFGKTLKASFRQ) the chain is on the cytoplasmic side. An S4-S5 linker region spans residues 368–383 (SGLQMFGKTLKASFRQ). A helical transmembrane segment spans residues 384–404 (LGMMAMVVMTGVIFFSTLVYF). The Extracellular portion of the chain corresponds to 405–417 (LEKDEPASKFHSI). Residues 418 to 429 (PAACWWCIVTMT) constitute an intramembrane region (helical). An intramembrane segment occupies 430–434 (TVGYG). Positions 430–435 (TVGYGD) match the Selectivity filter motif. Residues 435–445 (DLTPVTVPGKL) lie on the Extracellular side of the membrane. The chain crosses the membrane as a helical span at residues 446-466 (VATGAIACGVLVLALPITIIV). Residues 467 to 503 (DNFMKVAETERPAGGNRYRTSQYPKATKSEQMILKVT) lie on the Cytoplasmic side of the membrane. The short motif at 496-500 (EQMIL) is the Required for dendritic localization element.

It belongs to the potassium channel family. B (Shab) (TC 1.A.1.2) subfamily. Kv2.2/KCNB2 sub-subfamily. In terms of assembly, homotetramer or heterotetramer. Interacts with unc-101 (via N-terminus); which targets kvs-4 to dendrites. As to expression, expressed in the cholinergic motor neuron DA9, mechanosensory neurons ALM and PLM, and the interneuron PVPL.

It localises to the cell membrane. Its subcellular location is the perikaryon. The protein localises to the cell projection. The protein resides in the axon. It is found in the dendrite. Voltage-gated potassium channel that mediates transmembrane potassium transport in excitable membranes. The polypeptide is Probable voltage-gated potassium channel subunit kvs-4 (Caenorhabditis elegans).